The following is a 107-amino-acid chain: uncharacterized protein (107 aa).

Residues 9–31 (AAAIITAPTILAMMSTVLRALIF) form a helical membrane-spanning segment.

The protein localises to the membrane. This is an uncharacterized protein from Archaeoglobus fulgidus (strain ATCC 49558 / DSM 4304 / JCM 9628 / NBRC 100126 / VC-16).